Consider the following 910-residue polypeptide: Protein translocase subunit SecA (910 aa).

ATP contacts are provided by residues Q89, 107-111 (GEGKT), and D502. 4 residues coordinate Zn(2+): C889, C891, C900, and H901.

It belongs to the SecA family. Monomer and homodimer. Part of the essential Sec protein translocation apparatus which comprises SecA, SecYEG and auxiliary proteins SecDF-YajC and YidC. Zn(2+) serves as cofactor.

It localises to the cell inner membrane. Its subcellular location is the cytoplasm. The catalysed reaction is ATP + H2O + cellular proteinSide 1 = ADP + phosphate + cellular proteinSide 2.. Part of the Sec protein translocase complex. Interacts with the SecYEG preprotein conducting channel. Has a central role in coupling the hydrolysis of ATP to the transfer of proteins into and across the cell membrane, serving both as a receptor for the preprotein-SecB complex and as an ATP-driven molecular motor driving the stepwise translocation of polypeptide chains across the membrane. The polypeptide is Protein translocase subunit SecA (Bartonella bacilliformis (strain ATCC 35685 / KC583 / Herrer 020/F12,63)).